Reading from the N-terminus, the 139-residue chain is Iron-sulfur cluster assembly 1 homolog, mitochondrial (139 aa).

3 residues coordinate Fe cation: cysteine 52, cysteine 117, and cysteine 119.

It belongs to the HesB/IscA family.

It is found in the mitochondrion. In terms of biological role, involved in the assembly of mitochondrial iron-sulfur proteins. Probably involved in the binding of an intermediate of Fe/S cluster assembly. In Dictyostelium discoideum (Social amoeba), this protein is Iron-sulfur cluster assembly 1 homolog, mitochondrial (isca1).